The primary structure comprises 167 residues: U-scoloptoxin(08)-Er5a (167 aa).

The N-terminal stretch at 1-22 is a signal peptide; the sequence is MKTNCEFPLLCLLIVLVANVEG. The propeptide occupies 23-94; that stretch reads EVEDTGLKMV…KRLWRNWERR (72 aa). RLWRNWE repeat units follow at residues 34–40, 61–67, and 86–92; these read RLWRNWE. Residue Q95 is modified to Pyrrolidone carboxylic acid. The stretch at 107 to 113 is one RLWRNWE 4; approximate repeat; it reads ELWRNWE. Residues 112 to 118 constitute a propeptide that is removed on maturation; sequence WEDLKRR. Residue Q119 is modified to Pyrrolidone carboxylic acid. Residues 134-140 form an RLWRNWE 5 repeat; the sequence is RLWRNWE. The propeptide occupies 139 to 167; sequence WEDNHATLRKRSADSLSRQKRLGKERGKE. Residues 147-167 form a disordered region; the sequence is RKRSADSLSRQKRLGKERGKE.

This sequence belongs to the scoloptoxin-08 family. Expressed by the venom gland.

The protein resides in the secreted. The sequence is that of U-scoloptoxin(08)-Er5a from Ethmostigmus rubripes (Giant centipede).